We begin with the raw amino-acid sequence, 328 residues long: Phenylalanine--tRNA ligase alpha subunit (328 aa).

E253 is a Mg(2+) binding site.

Belongs to the class-II aminoacyl-tRNA synthetase family. Phe-tRNA synthetase alpha subunit type 1 subfamily. Tetramer of two alpha and two beta subunits. The cofactor is Mg(2+).

The protein resides in the cytoplasm. It carries out the reaction tRNA(Phe) + L-phenylalanine + ATP = L-phenylalanyl-tRNA(Phe) + AMP + diphosphate + H(+). The protein is Phenylalanine--tRNA ligase alpha subunit of Coxiella burnetii (strain Dugway 5J108-111).